The following is an 808-amino-acid chain: Dynamin-like protein B (808 aa).

One can recognise a Dynamin-type G domain in the interval 43 to 340 (FIETPEFVFI…TWRKYLDSVP (298 aa)). The G1 motif stretch occupies residues 53–60 (GKDGNGKS). 53 to 60 (GKDGNGKS) is a binding site for GTP. The G2 motif stretch occupies residues 79–80 (LR). The interval 150 to 153 (EPPS) is G3 motif. Residues 150-154 (EPPSV) and 239-242 (NKFH) each bind GTP. The tract at residues 239 to 242 (NKFH) is G4 motif. The segment at 276 to 279 (PSTA) is G5 motif. Disordered regions lie at residues 536-565 (SSFRRHGNSTSLFQDNSSPSSQSQSQSSSI) and 665-695 (SLNNNNKSTTPGNNNNNNNNNSNNNYNNSNH). Low complexity-rich tracts occupy residues 552–565 (SSPSSQSQSQSSSI) and 665–694 (SLNNNNKSTTPGNNNNNNNNNSNNNYNNSN).

This sequence belongs to the TRAFAC class dynamin-like GTPase superfamily. Dynamin/Fzo/YdjA family.

The protein resides in the cytoplasm. The enzyme catalyses GTP + H2O = GDP + phosphate + H(+). Its function is as follows. Involved in cytokinesis. May hydrolyze GTP. The polypeptide is Dynamin-like protein B (dlpB) (Dictyostelium discoideum (Social amoeba)).